The primary structure comprises 334 residues: Non-functional pseudokinase ZED1 (334 aa).

Positions 49–334 (FSESRIISSW…KELKLIEKLS (286 aa)) constitute a Protein kinase domain. Residues 55 to 63 (ISSWGYFIW) and Lys76 each bind ATP. O-acetylthreonine is present on residues Thr125 and Thr177.

The protein belongs to the protein kinase superfamily. Ser/Thr protein kinase family. ZRK subfamily. As to quaternary structure, interacts with RPP13L4/ZAR1. Component of an immune signaling complex made of, at least, SZE1, BKN2/SZE2, ZAR1 and ZED1. Binds directly to SZE1 at the plasma membrane. As to expression, expressed in seedlings, young leaves, floral organs, shoot apical meristems (SAM) and inflorescence stems.

The protein resides in the cytoplasm. The protein localises to the cytosol. It is found in the nucleus. It localises to the cell membrane. In terms of biological role, together with RPP13L4/ZAR1, involved in the ambient temperature (above 22 degrees Celsius)-sensitive aerial organ development. Together with RPP13L4/ZAR1, involved in the regulation of the ambient temperature-sensitive intersection of growth and immune response in the absence of pathogens, by repressing the transcription of SNC1. Probable non-functional kinase required for recognition of the Pseudomonas syringae type III effector HopZ1a by RPP13L4/ZAR1 and, together with SZE1 and SZE2, to trigger subsequent defense responses. May function as a decoy to trap HopZ1a in the ZAR1 complex for recognition by the plant immune system. The chain is Non-functional pseudokinase ZED1 from Arabidopsis thaliana (Mouse-ear cress).